Here is a 108-residue protein sequence, read N- to C-terminus: Glutaredoxin-1 (108 aa).

Positions 3-106 (EEFVQQRLAN…DILSSIGVLR (104 aa)) constitute a Glutaredoxin domain. A disulfide bond links cysteine 23 and cysteine 26.

The protein belongs to the glutaredoxin family.

Its subcellular location is the virion. Has thioltransferase and dehydroascorbate reductase activities. This chain is Glutaredoxin-1 (OPG075), found in Cowpox virus (strain GRI-90 / Grishak) (CPV).